Consider the following 615-residue polypeptide: Elongation factor 4 (615 aa).

One can recognise a tr-type G domain in the interval 17 to 198 (ASIRNFCIIA…RVSRTIPAPV (182 aa)). GTP contacts are provided by residues 29-34 (DHGKST) and 145-148 (NKID).

This sequence belongs to the TRAFAC class translation factor GTPase superfamily. Classic translation factor GTPase family. LepA subfamily.

It localises to the cell membrane. The enzyme catalyses GTP + H2O = GDP + phosphate + H(+). Its function is as follows. Required for accurate and efficient protein synthesis under certain stress conditions. May act as a fidelity factor of the translation reaction, by catalyzing a one-codon backward translocation of tRNAs on improperly translocated ribosomes. Back-translocation proceeds from a post-translocation (POST) complex to a pre-translocation (PRE) complex, thus giving elongation factor G a second chance to translocate the tRNAs correctly. Binds to ribosomes in a GTP-dependent manner. This chain is Elongation factor 4, found in Clavibacter michiganensis subsp. michiganensis (strain NCPPB 382).